The sequence spans 162 residues: Toluate 1,2-dioxygenase subunit beta (162 aa).

The protein belongs to the bacterial ring-hydroxylating dioxygenase beta subunit family. This dioxygenase system consists of three proteins: the two subunits of the hydroxylase component (XylX and XylY), and an electron transfer component (XylZ).

It participates in xenobiotic degradation; toluene degradation. This chain is Toluate 1,2-dioxygenase subunit beta (xylY), found in Pseudomonas putida (Arthrobacter siderocapsulatus).